The chain runs to 61 residues: Small ribosomal subunit protein uS14 (61 aa).

Residues Cys-24, Cys-27, Cys-40, and Cys-43 each coordinate Zn(2+).

The protein belongs to the universal ribosomal protein uS14 family. Zinc-binding uS14 subfamily. In terms of assembly, part of the 30S ribosomal subunit. Contacts proteins S3 and S10. Zn(2+) serves as cofactor.

Functionally, binds 16S rRNA, required for the assembly of 30S particles and may also be responsible for determining the conformation of the 16S rRNA at the A site. The sequence is that of Small ribosomal subunit protein uS14 from Syntrophus aciditrophicus (strain SB).